The following is a 386-amino-acid chain: S-adenosylmethionine synthase (386 aa).

His-17 serves as a coordination point for ATP. Residue Asp-19 coordinates Mg(2+). Glu-45 lines the K(+) pocket. Residues Glu-58 and Gln-101 each coordinate L-methionine. Positions 101–111 (QSPDISQGVTE) are flexible loop. Residues 168-170 (DAK), Asp-242, 248-249 (RK), Ala-265, and Lys-269 each bind ATP. Asp-242 serves as a coordination point for L-methionine. Lys-273 contacts L-methionine.

Belongs to the AdoMet synthase family. In terms of assembly, homotetramer; dimer of dimers. The cofactor is Mg(2+). It depends on K(+) as a cofactor.

Its subcellular location is the cytoplasm. The enzyme catalyses L-methionine + ATP + H2O = S-adenosyl-L-methionine + phosphate + diphosphate. It participates in amino-acid biosynthesis; S-adenosyl-L-methionine biosynthesis; S-adenosyl-L-methionine from L-methionine: step 1/1. Catalyzes the formation of S-adenosylmethionine (AdoMet) from methionine and ATP. The overall synthetic reaction is composed of two sequential steps, AdoMet formation and the subsequent tripolyphosphate hydrolysis which occurs prior to release of AdoMet from the enzyme. The sequence is that of S-adenosylmethionine synthase from Leptospira borgpetersenii serovar Hardjo-bovis (strain JB197).